The sequence spans 148 residues: MAESDWDTVTVLRKKGPSAAQAKSKQAVLAAQRRGEDVETSKKWAAGQNKQHFITKNTAKLDRETEELHHDRVPLEVGKVIQQGRQSKGMTQKDLATKINEKPQVIADYESGRAIPNNQVMGKIERAIGLKLRGKDIGKPLETGPKGK.

Residues M1 to Q26 form a disordered region. Residues I81–K135 form the HTH cro/C1-type domain. Positions Q92–S111 form a DNA-binding region, H-T-H motif.

The protein localises to the nucleus. Probable transcriptional coactivator. This is Endothelial differentiation-related factor 1 homolog (EDF1) from Gallus gallus (Chicken).